Consider the following 154-residue polypeptide: MPKGDGKLIAQNKKARHDYSIIDTMEAGMVLQGTEIKSIRNSRINLKDGFVRIRNGEAFLHNVHISPYEQGNIFNHDPLRTRKLLLHKKQISRLETETKNTGVTIVPLKVYIRDGYAKVLIGLAKGKKSYDKREDLKRKDVDRQIDRTLKNFSR.

It belongs to the SmpB family.

The protein localises to the cytoplasm. Functionally, required for rescue of stalled ribosomes mediated by trans-translation. Binds to transfer-messenger RNA (tmRNA), required for stable association of tmRNA with ribosomes. tmRNA and SmpB together mimic tRNA shape, replacing the anticodon stem-loop with SmpB. tmRNA is encoded by the ssrA gene; the 2 termini fold to resemble tRNA(Ala) and it encodes a 'tag peptide', a short internal open reading frame. During trans-translation Ala-aminoacylated tmRNA acts like a tRNA, entering the A-site of stalled ribosomes, displacing the stalled mRNA. The ribosome then switches to translate the ORF on the tmRNA; the nascent peptide is terminated with the 'tag peptide' encoded by the tmRNA and targeted for degradation. The ribosome is freed to recommence translation, which seems to be the essential function of trans-translation. This Enterococcus hirae (strain ATCC 9790 / DSM 20160 / JCM 8729 / LMG 6399 / NBRC 3181 / NCIMB 6459 / NCDO 1258 / NCTC 12367 / WDCM 00089 / R) protein is SsrA-binding protein.